A 608-amino-acid chain; its full sequence is Mitogen-activated protein kinase kinase kinase 1 (608 aa).

A compositionally biased stretch (basic residues) spans 1–13 (MDRILARMKKSTG). Residues 1–20 (MDRILARMKKSTGRRGGDKN) form a disordered region. The segment at 1–325 (MDRILARMKK…VSNTSPIYPD (325 aa)) is regulatory region. S62 is modified (phosphoserine). Positions 192 to 234 (MERTPTIVKSKGYLVPNNVVAVGVGVGGGIKGLRPPVLKPPPA) are binding with MPK4. Disordered regions lie at residues 228–247 (VLKP…GSSW) and 256–287 (SETV…EAEE). Residues 271–287 (DGCDEEEGKEEEAEAEE) show a composition bias toward acidic residues. The Protein kinase domain occupies 333 to 587 (WQKGQLLGRG…AAELLNHPFV (255 aa)). ATP-binding positions include 339 to 347 (LGRGSFGSV) and K361. D456 acts as the Proton acceptor in catalysis. S603 carries the phosphoserine modification.

The protein belongs to the protein kinase superfamily. STE Ser/Thr protein kinase family. MAP kinase kinase kinase subfamily. Interacts with MKK1, MMK2 and MPK4. May form a ternary complex composed of MEKK1 and MKK1/MKK2 and MPK4. Interacts with RACK1A, RACK1B and RACK1C. Binds to CRLK1. In terms of processing, phosphorylated by CRLK1 in response to cold.

The protein resides in the cell membrane. It localises to the endosome. It catalyses the reaction L-seryl-[protein] + ATP = O-phospho-L-seryl-[protein] + ADP + H(+). It carries out the reaction L-threonyl-[protein] + ATP = O-phospho-L-threonyl-[protein] + ADP + H(+). Activated by cold via CRLK1-mediated phosphorylation and leading to elevated kinase activity towards MKK2. Functionally, the MEKK1, MKK1/MKK2 and MPK4 function in a signaling pathway that modulates the expression of genes responding to biotic and abiotic stresses and also plays an important role in pathogen defense by negatively regulating innate immunity. Involved in the innate immune MAP kinase signaling cascade (MEKK1, MKK4/MKK5 and MPK3/MPK6) downstream of bacterial flagellin receptor FLS2. May be involved in the cold and salinity stress-mediated MAP kinase signaling cascade (MEKK1, MKK1/MKK2 and MPK4/MPK6). Activates by phosphorylation the downstream MKK2, MKK4 and MKK5 in a calcium-dependent manner. The sequence is that of Mitogen-activated protein kinase kinase kinase 1 (MEKK1) from Arabidopsis thaliana (Mouse-ear cress).